A 130-amino-acid polypeptide reads, in one-letter code: Small ribosomal subunit protein uS9 (130 aa).

This sequence belongs to the universal ribosomal protein uS9 family.

The polypeptide is Small ribosomal subunit protein uS9 (Aeromonas hydrophila subsp. hydrophila (strain ATCC 7966 / DSM 30187 / BCRC 13018 / CCUG 14551 / JCM 1027 / KCTC 2358 / NCIMB 9240 / NCTC 8049)).